Consider the following 267-residue polypeptide: 4-hydroxy-tetrahydrodipicolinate reductase (267 aa).

Residues 8-13 (GAAGRM) and D34 contribute to the NAD(+) site. R35 contacts NADP(+). NAD(+) is bound by residues 98–100 (GTT) and 122–125 (AANF). H155 acts as the Proton donor/acceptor in catalysis. H156 lines the (S)-2,3,4,5-tetrahydrodipicolinate pocket. Catalysis depends on K159, which acts as the Proton donor. 165–166 (GT) provides a ligand contact to (S)-2,3,4,5-tetrahydrodipicolinate.

It belongs to the DapB family.

Its subcellular location is the cytoplasm. It catalyses the reaction (S)-2,3,4,5-tetrahydrodipicolinate + NAD(+) + H2O = (2S,4S)-4-hydroxy-2,3,4,5-tetrahydrodipicolinate + NADH + H(+). The catalysed reaction is (S)-2,3,4,5-tetrahydrodipicolinate + NADP(+) + H2O = (2S,4S)-4-hydroxy-2,3,4,5-tetrahydrodipicolinate + NADPH + H(+). The protein operates within amino-acid biosynthesis; L-lysine biosynthesis via DAP pathway; (S)-tetrahydrodipicolinate from L-aspartate: step 4/4. Its function is as follows. Catalyzes the conversion of 4-hydroxy-tetrahydrodipicolinate (HTPA) to tetrahydrodipicolinate. The sequence is that of 4-hydroxy-tetrahydrodipicolinate reductase from Pseudomonas putida (strain ATCC 700007 / DSM 6899 / JCM 31910 / BCRC 17059 / LMG 24140 / F1).